Reading from the N-terminus, the 600-residue chain is Epidermal growth factor receptor kinase substrate 8-like protein 3 (600 aa).

Residues 28 to 155 (QHRVEHLMTC…ALEEELEERP (128 aa)) form the PTB domain. 2 disordered regions span residues 152–245 (EERP…PERD) and 429–452 (LHFP…PLSS). Low complexity predominate over residues 204–214 (SERSISPSSRS). Residue Ser238 is modified to Phosphoserine. The SH3 domain occupies 457–516 (RAALKMQVLYEFEARNAQELTVAQGEILEVLDQSKRWWLVKNEAGLTGYIPSNILEPLPA).

Belongs to the EPS8 family. As to quaternary structure, interacts with ABI1. Part of a complex that contains SOS1, ABI1 and EPS8L2. Interacts with FASLG. In terms of tissue distribution, detected in embryonic gut. Detected in adult testis, placenta, adrenal gland and intestine.

The protein localises to the cytoplasm. This Mus musculus (Mouse) protein is Epidermal growth factor receptor kinase substrate 8-like protein 3 (Eps8l3).